The following is a 255-amino-acid chain: tRNA pseudouridine synthase B (255 aa).

The active-site Nucleophile is Asp52. 3 residues coordinate substrate: Tyr80, Tyr183, and Leu204.

It belongs to the pseudouridine synthase TruB family. Type 1 subfamily.

The enzyme catalyses uridine(55) in tRNA = pseudouridine(55) in tRNA. Responsible for synthesis of pseudouridine from uracil-55 in the psi GC loop of transfer RNAs. This Blochmanniella floridana protein is tRNA pseudouridine synthase B.